We begin with the raw amino-acid sequence, 318 residues long: Ferrochelatase (318 aa).

His-194 and Glu-275 together coordinate Fe cation.

The protein belongs to the ferrochelatase family.

Its subcellular location is the cytoplasm. The catalysed reaction is heme b + 2 H(+) = protoporphyrin IX + Fe(2+). The protein operates within porphyrin-containing compound metabolism; protoheme biosynthesis; protoheme from protoporphyrin-IX: step 1/1. Its function is as follows. Catalyzes the ferrous insertion into protoporphyrin IX. In Xanthomonas axonopodis pv. citri (strain 306), this protein is Ferrochelatase.